A 445-amino-acid chain; its full sequence is Ribosomal protein uS12 methylthiotransferase RimO (445 aa).

The MTTase N-terminal domain occupies 11–121; sequence PKISFVSLGC…VLDAVHRASP (111 aa). The [4Fe-4S] cluster site is built by C20, C56, C85, C152, C156, and C159. The 238-residue stretch at 138–375 folds into the Radical SAM core domain; it reads LTPRHYAYLK…MARQQKISAR (238 aa). In terms of domain architecture, TRAM spans 378 to 444; it reads KRKVGTRQQI…EYDLHGTVAG (67 aa).

The protein belongs to the methylthiotransferase family. RimO subfamily. [4Fe-4S] cluster is required as a cofactor.

It localises to the cytoplasm. The catalysed reaction is L-aspartate(89)-[ribosomal protein uS12]-hydrogen + (sulfur carrier)-SH + AH2 + 2 S-adenosyl-L-methionine = 3-methylsulfanyl-L-aspartate(89)-[ribosomal protein uS12]-hydrogen + (sulfur carrier)-H + 5'-deoxyadenosine + L-methionine + A + S-adenosyl-L-homocysteine + 2 H(+). In terms of biological role, catalyzes the methylthiolation of an aspartic acid residue of ribosomal protein uS12. This Bradyrhizobium sp. (strain ORS 278) protein is Ribosomal protein uS12 methylthiotransferase RimO.